A 785-amino-acid chain; its full sequence is E3 UFM1-protein ligase 1 homolog (785 aa).

Positions 405-483 (ASFQDQDDDG…GGGGGNKKTV (79 aa)) are disordered.

Belongs to the UFL1 family.

In terms of biological role, E3 UFM1-protein ligase that mediates ufmylation of target proteins. This chain is E3 UFM1-protein ligase 1 homolog, found in Drosophila pseudoobscura pseudoobscura (Fruit fly).